A 445-amino-acid polypeptide reads, in one-letter code: Phosphoglucosamine mutase (445 aa).

The active-site Phosphoserine intermediate is Ser101. Positions 101, 240, 242, and 244 each coordinate Mg(2+). Residue Ser101 is modified to Phosphoserine.

The protein belongs to the phosphohexose mutase family. Requires Mg(2+) as cofactor. Activated by phosphorylation.

It carries out the reaction alpha-D-glucosamine 1-phosphate = D-glucosamine 6-phosphate. In terms of biological role, catalyzes the conversion of glucosamine-6-phosphate to glucosamine-1-phosphate. The chain is Phosphoglucosamine mutase from Pseudomonas fluorescens (strain SBW25).